Here is a 183-residue protein sequence, read N- to C-terminus: Translation initiation factor IF-3 (183 aa).

Residues 1–13 show a composition bias toward polar residues; the sequence is MKQPDRNQQQGAK. Residues 1 to 21 are disordered; it reads MKQPDRNQQQGAKSNRPAIND.

This sequence belongs to the IF-3 family. As to quaternary structure, monomer.

It is found in the cytoplasm. IF-3 binds to the 30S ribosomal subunit and shifts the equilibrium between 70S ribosomes and their 50S and 30S subunits in favor of the free subunits, thus enhancing the availability of 30S subunits on which protein synthesis initiation begins. This Acinetobacter baumannii (strain AYE) protein is Translation initiation factor IF-3.